We begin with the raw amino-acid sequence, 1183 residues long: MNKNVLKFMVFIMLLNIITPLFNKNEAFAARDISSTNVTDLTVSPSKIEDGGKTTVKMTFDDKNGKIQNGDMIKVAWPTSGTVKIEGYSKTVPLTVKGEQVGQAVITPDGATITFNDKVEKLSDVSGFAEFEVQGRNLTQTNTSDDKVATITSGNKSTNVTVHKSEAGTSSVFYYKTGDMLPEDTTHVRWFLNINNEKSYVSKDITIKDQIQGGQQLDLSTLNINVTGTHSNYYSGQSAITDFEKAFPGSKITVDNTKNTIDVTIPQGYGSYNSFSINYKTKITNEQQKEFVNNSQAWYQEHGKEEVNGKSFNHTVHNINANAGIEGTVKGELKVLKQDKDTKAPIANVKFKLSKKDGSVVKDNQKEIEIITDANGIANIKALPSGDYILKEIEAPRPYTFDKDKEYPFTMKDTDNQGYFTTIENAKAIEKTKDVSAQKVWEGTQKVKPTIYFKLYKQDDNQNTTPVDKAEIKKLEDGTTKVTWSNLPENDKNGKAIKYLVKEVNAQGEDTTPEGYTKKENGLVVTNTEKPIETTSISGEKVWDDKDNQDGKRPEKVSVNLLANGEKVKTLDVTSETNWKYEFKDLPKYDEGKKIEYTVTEDHVKDYTTDINGTTITNKYTPGETSATVTKNWDDNNNQDGKRPTEIKVELYQDGKATGKTAILNESNNWTHTWTGLDEKAKGQQVKYTVEELTKVKGYTTHVDNNDMGNLIVTNKYTPETTSISGEKVWDDKDNQDGKRPEKVSVNLLADGEKVKTLDVTSETNWKYEFKDLPKYDEGKKIEYTVTEDHVKDYTTDINGTTITNKYTPGETSATVTKNWDDNNNQDGKRPTEIKVELYQDGKATGKTAILNESNNWTHTWTGLDEKAKGQQVKYTVEELTKVKGYTTHVDNNDMGNLIVTNKYTPETTSISGEKVWDDKDNQDGKRPEKVSVNLLANGEKVKTLDVTSETNWKYEFKDLPKYDEGKKIEYTVTEDHVKDYTTDINGTTITNKYTPGETSATVTKNWDDNNNQDGKRPTEIKVELYQDGKATGKTAILNESNNWTHTWTGLDEKAKGQQVKYTVDELTKVNGYTTHVDNNDMGNLIVTNKYTPKKPNKPIYPEKPKDKTPPTKPDHSNKVKPTPPDKPSKVDKDDQPKDNKTKPENPLKELPKTGMKIITSWITWVFIGILGLYLILRKRFNS.

The first 29 residues, 1-29 (MNKNVLKFMVFIMLLNIITPLFNKNEAFA), serve as a signal peptide directing secretion. The interval 151–318 (ITSGNKSTNV…GKSFNHTVHN (168 aa)) is collagen-binding. 7 cross-links (isoaspartyl lysine isopeptide (Lys-Asn)) span residues 176–293 (KTGD…EFVN), 541–618 (KVWD…TITN), 631–715 (KNWD…IVTN), 728–805 (KVWD…TITN), 818–902 (KNWD…IVTN), 915–992 (KVWD…TITN), and 1005–1089 (KNWD…IVTN). A B1 repeat occupies 533–719 (ETTSISGEKV…NLIVTNKYTP (187 aa)). Positions 533–1093 (ETTSISGEKV…NLIVTNKYTP (561 aa)) are 3 X 187 AA approximate tandem repeats. The stretch at 720–906 (ETTSISGEKV…NLIVTNKYTP (187 aa)) is one B2 repeat. One copy of the B3 repeat lies at 907 to 1093 (ETTSISGEKV…NLIVTNKYTP (187 aa)). The tract at residues 1074–1150 (TTHVDNNDMG…KTKPENPLKE (77 aa)) is disordered. Composition is skewed to basic and acidic residues over residues 1101–1118 (YPEK…DHSN) and 1127–1150 (KPSK…PLKE). The LPXTG sorting signal signature appears at 1151–1155 (LPKTG). Position 1154 is a pentaglycyl murein peptidoglycan amidated threonine (Thr1154). Residues 1155-1183 (GMKIITSWITWVFIGILGLYLILRKRFNS) constitute a propeptide, removed by sortase.

In terms of assembly, interacts (via N-terminus) with type I collagen. Interacts with host C1QA.

The protein localises to the secreted. Its subcellular location is the cell wall. Collagen-binding adhesin that mediates bacterial adherence to collagenous tissues such as cartilage. Participates in the infectious process by acting as a virulence factor in many different animal models of staphylococcal infections including arthritis, endocarditis and keratitis. Inhibits the activation of the classical complement pathway by interacting with host C1q and interfering with the association between host C1r with C1q. The polypeptide is Collagen adhesin (cna) (Staphylococcus aureus).